Consider the following 52-residue polypeptide: Superoxide dismutase [Cu-Zn] 2 (52 aa).

A Cu cation-binding site is contributed by H44.

The protein belongs to the Cu-Zn superoxide dismutase family. Homodimer. The cofactor is Cu cation. Zn(2+) is required as a cofactor.

It localises to the cytoplasm. The catalysed reaction is 2 superoxide + 2 H(+) = H2O2 + O2. Its function is as follows. Destroys radicals which are normally produced within the cells and which are toxic to biological systems. The sequence is that of Superoxide dismutase [Cu-Zn] 2 from Debaryomyces hansenii (Yeast).